A 604-amino-acid chain; its full sequence is Protein TAX4 (604 aa).

5 disordered regions span residues His38 to Ile77, Ser132 to Glu249, Gly267 to Asn299, Asp338 to Lys380, and Pro394 to Lys428. Polar residues predominate over residues Tyr176–Ile185. 2 stretches are compositionally biased toward low complexity: residues Ser186–Ser203 and Ser224–Leu240. Composition is skewed to basic residues over residues Ser276 to Leu290, Lys366 to Leu379, and Pro396 to Ser421. One can recognise an EH domain in the interval Ala469 to Val559.

It belongs to the IRS4 family. In terms of assembly, interacts with INP51.

In terms of biological role, with IRS4, acts as a positive regulator of INP51 activity and phosphatidylinositol 4,5-bisphosphate turnover. Negatively regulates signaling through the cell integrity pathway, including the MAP kinase SLT2. This is Protein TAX4 (TAX4) from Saccharomyces cerevisiae (strain ATCC 204508 / S288c) (Baker's yeast).